Here is a 418-residue protein sequence, read N- to C-terminus: Glutamyl-tRNA reductase (418 aa).

Residues 49 to 52, Ser107, 112 to 114, and Gln118 each bind substrate; these read TCNR and EPQ. Cys50 functions as the Nucleophile in the catalytic mechanism. 187 to 192 is a binding site for NADP(+); that stretch reads GAGETI.

It belongs to the glutamyl-tRNA reductase family. As to quaternary structure, homodimer.

The catalysed reaction is (S)-4-amino-5-oxopentanoate + tRNA(Glu) + NADP(+) = L-glutamyl-tRNA(Glu) + NADPH + H(+). The protein operates within porphyrin-containing compound metabolism; protoporphyrin-IX biosynthesis; 5-aminolevulinate from L-glutamyl-tRNA(Glu): step 1/2. Catalyzes the NADPH-dependent reduction of glutamyl-tRNA(Glu) to glutamate 1-semialdehyde (GSA). The sequence is that of Glutamyl-tRNA reductase from Aeromonas salmonicida (strain A449).